The primary structure comprises 231 residues: 2,3,4,5-tetrahydropyridine-2,6-dicarboxylate N-acetyltransferase (231 aa).

This sequence belongs to the transferase hexapeptide repeat family. DapH subfamily.

It catalyses the reaction (S)-2,3,4,5-tetrahydrodipicolinate + acetyl-CoA + H2O = L-2-acetamido-6-oxoheptanedioate + CoA. It participates in amino-acid biosynthesis; L-lysine biosynthesis via DAP pathway; LL-2,6-diaminopimelate from (S)-tetrahydrodipicolinate (acetylase route): step 1/3. Its function is as follows. Catalyzes the transfer of an acetyl group from acetyl-CoA to tetrahydrodipicolinate. The polypeptide is 2,3,4,5-tetrahydropyridine-2,6-dicarboxylate N-acetyltransferase (Thermosipho melanesiensis (strain DSM 12029 / CIP 104789 / BI429)).